Reading from the N-terminus, the 321-residue chain is Fe-S cluster assembly protein DRE2 (321 aa).

The interval Met1–Val131 is N-terminal SAM-like domain. The interval Pro132 to Met213 is linker. 4 residues coordinate [2Fe-2S] cluster: Cys223, Cys234, Cys237, and Cys239. Residues Cys223–Cys239 are fe-S binding site A. [4Fe-4S] cluster contacts are provided by Cys284, Cys287, Cys295, and Cys298. 2 consecutive short sequence motifs (cx2C motif) follow at residues Cys284 to Cys287 and Cys295 to Cys298. Positions Cys284–Cys298 are fe-S binding site B.

It belongs to the anamorsin family. As to quaternary structure, monomer. Interacts with TAH18. Interacts with MIA40. It depends on [2Fe-2S] cluster as a cofactor. [4Fe-4S] cluster serves as cofactor.

It is found in the cytoplasm. It localises to the mitochondrion intermembrane space. In terms of biological role, component of the cytosolic iron-sulfur (Fe-S) protein assembly (CIA) machinery required for the maturation of extramitochondrial Fe-S proteins. Part of an electron transfer chain functioning in an early step of cytosolic Fe-S biogenesis, facilitating the de novo assembly of a [4Fe-4S] cluster on the scaffold complex CFD1-NBP35. Electrons are transferred to DRE2 from NADPH via the FAD- and FMN-containing protein TAH18. TAH18-DRE2 are also required for the assembly of the diferric tyrosyl radical cofactor of ribonucleotide reductase (RNR), probably by providing electrons for reduction during radical cofactor maturation in the catalytic small subunit RNR2. This Coccidioides immitis (strain RS) (Valley fever fungus) protein is Fe-S cluster assembly protein DRE2.